The primary structure comprises 186 residues: Peptidyl-tRNA hydrolase (186 aa).

Position 14 (Tyr-14) interacts with tRNA. The active-site Proton acceptor is the His-19. Positions 64, 66, and 112 each coordinate tRNA.

Belongs to the PTH family. As to quaternary structure, monomer.

It localises to the cytoplasm. The enzyme catalyses an N-acyl-L-alpha-aminoacyl-tRNA + H2O = an N-acyl-L-amino acid + a tRNA + H(+). Hydrolyzes ribosome-free peptidyl-tRNAs (with 1 or more amino acids incorporated), which drop off the ribosome during protein synthesis, or as a result of ribosome stalling. Functionally, catalyzes the release of premature peptidyl moieties from peptidyl-tRNA molecules trapped in stalled 50S ribosomal subunits, and thus maintains levels of free tRNAs and 50S ribosomes. This Geobacillus kaustophilus (strain HTA426) protein is Peptidyl-tRNA hydrolase.